The following is a 24-amino-acid chain: IRCTGSKECYSPCYKATGCPNAKC.

An intrachain disulfide couples Cys3 to Cys24.

Belongs to the short scorpion toxin superfamily. Potassium channel inhibitor family. Alpha-KTx 06 subfamily. As to expression, expressed by the venom gland.

Its subcellular location is the secreted. In terms of biological role, blocks voltage-gated potassium channels. This is Potassium channel toxin alpha-KTx 6 OcyKTx5 from Opisthacanthus cayaporum (South American scorpion).